Here is a 145-residue protein sequence, read N- to C-terminus: Small ribosomal subunit protein eS19 (145 aa).

It belongs to the eukaryotic ribosomal protein eS19 family. Part of the 30S ribosomal subunit.

In terms of biological role, may be involved in maturation of the 30S ribosomal subunit. The protein is Small ribosomal subunit protein eS19 of Methanothermobacter thermautotrophicus (strain ATCC 29096 / DSM 1053 / JCM 10044 / NBRC 100330 / Delta H) (Methanobacterium thermoautotrophicum).